The chain runs to 137 residues: Ribosome-binding factor A (137 aa).

Residues 110–137 (RIQQEKEGATDDRDQNDSGEDATPHSND) are disordered. Basic and acidic residues predominate over residues 112-125 (QQEKEGATDDRDQN).

The protein belongs to the RbfA family. In terms of assembly, monomer. Binds 30S ribosomal subunits, but not 50S ribosomal subunits or 70S ribosomes.

Its subcellular location is the cytoplasm. One of several proteins that assist in the late maturation steps of the functional core of the 30S ribosomal subunit. Associates with free 30S ribosomal subunits (but not with 30S subunits that are part of 70S ribosomes or polysomes). Required for efficient processing of 16S rRNA. May interact with the 5'-terminal helix region of 16S rRNA. In Rhodopirellula baltica (strain DSM 10527 / NCIMB 13988 / SH1), this protein is Ribosome-binding factor A.